Consider the following 212-residue polypeptide: Thiamine-phosphate synthase (212 aa).

38-42 is a binding site for 4-amino-2-methyl-5-(diphosphooxymethyl)pyrimidine; it reads QLREK. 2 residues coordinate Mg(2+): D71 and D90. K138 serves as a coordination point for 4-amino-2-methyl-5-(diphosphooxymethyl)pyrimidine. Residue G166 participates in 2-[(2R,5Z)-2-carboxy-4-methylthiazol-5(2H)-ylidene]ethyl phosphate binding.

Belongs to the thiamine-phosphate synthase family. Requires Mg(2+) as cofactor.

It carries out the reaction 2-[(2R,5Z)-2-carboxy-4-methylthiazol-5(2H)-ylidene]ethyl phosphate + 4-amino-2-methyl-5-(diphosphooxymethyl)pyrimidine + 2 H(+) = thiamine phosphate + CO2 + diphosphate. It catalyses the reaction 2-(2-carboxy-4-methylthiazol-5-yl)ethyl phosphate + 4-amino-2-methyl-5-(diphosphooxymethyl)pyrimidine + 2 H(+) = thiamine phosphate + CO2 + diphosphate. The enzyme catalyses 4-methyl-5-(2-phosphooxyethyl)-thiazole + 4-amino-2-methyl-5-(diphosphooxymethyl)pyrimidine + H(+) = thiamine phosphate + diphosphate. It functions in the pathway cofactor biosynthesis; thiamine diphosphate biosynthesis; thiamine phosphate from 4-amino-2-methyl-5-diphosphomethylpyrimidine and 4-methyl-5-(2-phosphoethyl)-thiazole: step 1/1. In terms of biological role, condenses 4-methyl-5-(beta-hydroxyethyl)thiazole monophosphate (THZ-P) and 2-methyl-4-amino-5-hydroxymethyl pyrimidine pyrophosphate (HMP-PP) to form thiamine monophosphate (TMP). The sequence is that of Thiamine-phosphate synthase from Chlamydia caviae (strain ATCC VR-813 / DSM 19441 / 03DC25 / GPIC) (Chlamydophila caviae).